A 218-amino-acid polypeptide reads, in one-letter code: Probable 3-keto-L-gulonate-6-phosphate decarboxylase (218 aa).

Asp-11 is a binding site for substrate. Positions 33 and 62 each coordinate Mg(2+). Arg-194 lines the substrate pocket.

Belongs to the HPS/KGPDC family. KGPDC subfamily. Requires Mg(2+) as cofactor.

It carries out the reaction 3-dehydro-L-gulonate 6-phosphate + H(+) = L-xylulose 5-phosphate + CO2. It functions in the pathway cofactor degradation; L-ascorbate degradation; D-xylulose 5-phosphate from L-ascorbate: step 2/4. Functionally, catalyzes the decarboxylation of 3-keto-L-gulonate-6-P into L-xylulose-5-P. Is involved in the anaerobic L-ascorbate utilization. In Mycoplasma pneumoniae (strain ATCC 29342 / M129 / Subtype 1) (Mycoplasmoides pneumoniae), this protein is Probable 3-keto-L-gulonate-6-phosphate decarboxylase (ulaD).